The sequence spans 393 residues: NADH-quinone oxidoreductase subunit D (393 aa).

Belongs to the complex I 49 kDa subunit family. NDH-1 is composed of 14 different subunits. Subunits NuoB, C, D, E, F, and G constitute the peripheral sector of the complex.

It localises to the cell inner membrane. The enzyme catalyses a quinone + NADH + 5 H(+)(in) = a quinol + NAD(+) + 4 H(+)(out). Its function is as follows. NDH-1 shuttles electrons from NADH, via FMN and iron-sulfur (Fe-S) centers, to quinones in the respiratory chain. The immediate electron acceptor for the enzyme in this species is believed to be ubiquinone. Couples the redox reaction to proton translocation (for every two electrons transferred, four hydrogen ions are translocated across the cytoplasmic membrane), and thus conserves the redox energy in a proton gradient. The chain is NADH-quinone oxidoreductase subunit D from Ehrlichia canis (strain Jake).